The chain runs to 509 residues: tRNA-2-methylthio-N(6)-dimethylallyladenosine synthase (509 aa).

Over residues 1 to 15 the composition is skewed to polar residues; the sequence is MNEQQRLASQQVNSS. Residues 1–26 form a disordered region; it reads MNEQQRLASQQVNSSTKKEEKDYSKY. Basic and acidic residues predominate over residues 16–25; it reads TKKEEKDYSK. Positions 66–184 constitute an MTTase N-terminal domain; it reads RKFYIRTYGC…LPYILKDAMF (119 aa). Positions 75, 111, 145, 221, 225, and 228 each coordinate [4Fe-4S] cluster. In terms of domain architecture, Radical SAM core spans 207-437; the sequence is RRGDIKAWVN…NALVNKLAIE (231 aa). In terms of domain architecture, TRAM spans 440–503; that stretch reads NRYKGQIVEV…TWSLNGELVE (64 aa).

The protein belongs to the methylthiotransferase family. MiaB subfamily. As to quaternary structure, monomer. It depends on [4Fe-4S] cluster as a cofactor.

It is found in the cytoplasm. The enzyme catalyses N(6)-dimethylallyladenosine(37) in tRNA + (sulfur carrier)-SH + AH2 + 2 S-adenosyl-L-methionine = 2-methylsulfanyl-N(6)-dimethylallyladenosine(37) in tRNA + (sulfur carrier)-H + 5'-deoxyadenosine + L-methionine + A + S-adenosyl-L-homocysteine + 2 H(+). Its function is as follows. Catalyzes the methylthiolation of N6-(dimethylallyl)adenosine (i(6)A), leading to the formation of 2-methylthio-N6-(dimethylallyl)adenosine (ms(2)i(6)A) at position 37 in tRNAs that read codons beginning with uridine. The polypeptide is tRNA-2-methylthio-N(6)-dimethylallyladenosine synthase (Bacillus cereus (strain AH187)).